The sequence spans 242 residues: Thaumatin-like protein 2 (242 aa).

Positions 1–23 (MMKTLGAVLSLSLTLLSFGGAHA) are cleaved as a signal peptide. Disulfide bonds link Cys-32–Cys-241, Cys-77–Cys-87, Cys-92–Cys-99, Cys-147–Cys-230, Cys-152–Cys-213, Cys-160–Cys-176, Cys-180–Cys-189, and Cys-190–Cys-200.

The protein belongs to the thaumatin family. In terms of tissue distribution, preferentially expressed in the abscission zone of fruit. Also expressed in leaf abscission zone.

It localises to the secreted. Its function is as follows. May be involved in protecting plant tissues from pathogen infection. In Prunus persica (Peach), this protein is Thaumatin-like protein 2.